Consider the following 617-residue polypeptide: MDNRGLRLFIVEGKELKGSDNGGSSSDPYVKLKFNGNSFKTETIKNTLSPVWNQSFDIGIINVNDPNAIIEVECLDWDRFGKHDSLGKVQLPIAILREAATFGQTDKWLNLDKKGYVRVGFQFNPPYPLQQHISPDGNPNIIQNQIQQQNLISSNGQLPPPVYYEPIYLKTHPTVLEAEFILPNDLYQKTIYVTGEPVRASLVLYVNQPIVVRSLFVSLKGKTSVCGKKQKELIQDLRNLLHTSIGPSSPNSQNQKVALDIGKHIYPFEFFIPKHCNSSIDGVGNYKVLYRFQFNADIVNLPDIQLEREITVVNIEDTVHRMTQSQIHEKCSKSPLTGGTIEMTITAPKNSYYPGEDIELQVHVNNSSKKKVKKIELELQRTISIQHEKGVPTQVLKVSKNFFPKIQQNQQSTQIVVMETPQTLLNSIYQSGIIKIEYKVRAVLDILDCIDLYTIFPVNIVLPDPKRVILPNPLDELSKIPRYIQDWTPRNLLSWLYFRMNCPEVVTSNPEFYQYCLSGNELLSIPDTILLEKVLKGAGTRTTEIHNAIKIEIDRVLSVRTILKDNQLPHLIQTFENELVTFDLLSSLSSIDLSHLTSTIGDRIRLQNAFEKLKLNN.

Positions 1–109 (MDNRGLRLFI…ATFGQTDKWL (109 aa)) constitute a C2 domain. Ca(2+)-binding residues include Asp20, Asp27, Asp76, Asp78, and Asp84.

The protein belongs to the arrestin family. Requires Ca(2+) as cofactor.

In Dictyostelium discoideum (Social amoeba), this protein is Arrestin domain-containing protein B (adcB).